A 176-amino-acid polypeptide reads, in one-letter code: Transcription termination/antitermination protein NusG (176 aa).

Residues 125–149 (GEVVRVVEGPFANFTATVEEYDVEH) enclose the KOW domain.

The protein belongs to the NusG family.

In terms of biological role, participates in transcription elongation, termination and antitermination. This Helicobacter pylori (strain J99 / ATCC 700824) (Campylobacter pylori J99) protein is Transcription termination/antitermination protein NusG.